Here is a 364-residue protein sequence, read N- to C-terminus: DNA replication and repair protein RecF (364 aa).

30–37 (GANGSGKT) provides a ligand contact to ATP.

Belongs to the RecF family.

Its subcellular location is the cytoplasm. In terms of biological role, the RecF protein is involved in DNA metabolism; it is required for DNA replication and normal SOS inducibility. RecF binds preferentially to single-stranded, linear DNA. It also seems to bind ATP. This is DNA replication and repair protein RecF from Sodalis glossinidius.